A 138-amino-acid polypeptide reads, in one-letter code: UPF0201 protein TK1335 (138 aa).

The protein belongs to the UPF0201 family.

This Thermococcus kodakarensis (strain ATCC BAA-918 / JCM 12380 / KOD1) (Pyrococcus kodakaraensis (strain KOD1)) protein is UPF0201 protein TK1335.